A 141-amino-acid chain; its full sequence is Large ribosomal subunit protein uL11 (141 aa).

It belongs to the universal ribosomal protein uL11 family. In terms of assembly, part of the ribosomal stalk of the 50S ribosomal subunit. Interacts with L10 and the large rRNA to form the base of the stalk. L10 forms an elongated spine to which L12 dimers bind in a sequential fashion forming a multimeric L10(L12)X complex. One or more lysine residues are methylated.

Its function is as follows. Forms part of the ribosomal stalk which helps the ribosome interact with GTP-bound translation factors. This Streptococcus thermophilus (strain CNRZ 1066) protein is Large ribosomal subunit protein uL11.